The chain runs to 494 residues: Guanosine-5'-triphosphate,3'-diphosphate pyrophosphatase (494 aa).

This sequence belongs to the GppA/Ppx family. GppA subfamily.

The catalysed reaction is guanosine 3'-diphosphate 5'-triphosphate + H2O = guanosine 3',5'-bis(diphosphate) + phosphate + H(+). It functions in the pathway purine metabolism; ppGpp biosynthesis; ppGpp from GTP: step 2/2. In terms of biological role, catalyzes the conversion of pppGpp to ppGpp. Guanosine pentaphosphate (pppGpp) is a cytoplasmic signaling molecule which together with ppGpp controls the 'stringent response', an adaptive process that allows bacteria to respond to amino acid starvation, resulting in the coordinated regulation of numerous cellular activities. This is Guanosine-5'-triphosphate,3'-diphosphate pyrophosphatase from Shigella sonnei (strain Ss046).